The primary structure comprises 457 residues: Argininosuccinate lyase (457 aa).

The protein belongs to the lyase 1 family. Argininosuccinate lyase subfamily.

It localises to the cytoplasm. The catalysed reaction is 2-(N(omega)-L-arginino)succinate = fumarate + L-arginine. It participates in amino-acid biosynthesis; L-arginine biosynthesis; L-arginine from L-ornithine and carbamoyl phosphate: step 3/3. This Yersinia pseudotuberculosis serotype IB (strain PB1/+) protein is Argininosuccinate lyase.